The primary structure comprises 400 residues: Acetate kinase (400 aa).

Residue asparagine 10 coordinates Mg(2+). Lysine 17 is an ATP binding site. Arginine 91 contacts substrate. The active-site Proton donor/acceptor is the aspartate 150. Residues 210-214 (HLGNG), 285-287 (DCR), and 333-337 (GIGEN) each bind ATP. Glutamate 387 is a Mg(2+) binding site.

It belongs to the acetokinase family. Homodimer. Requires Mg(2+) as cofactor. It depends on Mn(2+) as a cofactor.

Its subcellular location is the cytoplasm. The catalysed reaction is acetate + ATP = acetyl phosphate + ADP. Its pathway is metabolic intermediate biosynthesis; acetyl-CoA biosynthesis; acetyl-CoA from acetate: step 1/2. In terms of biological role, catalyzes the formation of acetyl phosphate from acetate and ATP. Can also catalyze the reverse reaction. The polypeptide is Acetate kinase (Yersinia pseudotuberculosis serotype IB (strain PB1/+)).